Reading from the N-terminus, the 220-residue chain is Probable nicotinate-nucleotide adenylyltransferase (220 aa).

The protein belongs to the NadD family.

It catalyses the reaction nicotinate beta-D-ribonucleotide + ATP + H(+) = deamido-NAD(+) + diphosphate. The protein operates within cofactor biosynthesis; NAD(+) biosynthesis; deamido-NAD(+) from nicotinate D-ribonucleotide: step 1/1. Its function is as follows. Catalyzes the reversible adenylation of nicotinate mononucleotide (NaMN) to nicotinic acid adenine dinucleotide (NaAD). This Serratia proteamaculans (strain 568) protein is Probable nicotinate-nucleotide adenylyltransferase.